Reading from the N-terminus, the 122-residue chain is Large ribosomal subunit protein uL14c (122 aa).

The protein belongs to the universal ribosomal protein uL14 family. As to quaternary structure, part of the 50S ribosomal subunit.

The protein localises to the plastid. It is found in the chloroplast. Binds to 23S rRNA. The sequence is that of Large ribosomal subunit protein uL14c from Zygnema circumcarinatum (Green alga).